The following is a 668-amino-acid chain: Trehalase (668 aa).

Positions 1–23 (MVLQQTEPTDGADRKASDGPLTV) are disordered.

Belongs to the glycosyl hydrolase 15 family. In terms of assembly, homomultimer of 20 or more subunits. The cofactor is Mg(2+). Phosphate is required as a cofactor.

It carries out the reaction alpha,alpha-trehalose + H2O = alpha-D-glucose + beta-D-glucose. The protein operates within glycan degradation; trehalose degradation; D-glucose from alpha,alpha-trehalose: step 1/1. Its activity is regulated as follows. Inhibited by pyrophosphate and polyphosphates. Also competitively inhibited by validoxylamine and castanospermine, but not by trehazolin. Its function is as follows. Catalyzes the hydrolysis of alpha,alpha-trehalose into two molecules of D-glucose. Does not hydrolyze maltose, isomaltose, sucrose, cellobiose, p-nitrophenyl-alpha-D-glucopyranoside, and methyl-alpha-D-glucopyranoside. Is also inactive on alpha,beta-trehalose, beta,beta-trehalose, alpha,alpha-trehalose-6,6'-dibehenate, trehalulose, nigerose, and trehalose dimycolate. This chain is Trehalase, found in Mycolicibacterium smegmatis (strain ATCC 700084 / mc(2)155) (Mycobacterium smegmatis).